The following is a 454-amino-acid chain: MQIVVVGVDYKTAPVEIREKLAFAEAELGAAMKQLAKQKSVLENVIVSTCNRTEVYAVVDQLHTGRYYMKAFLAEWFGVKVEAIAPYLRVLEGEAAIKHLFRVAAGLDSMVLGETQILGQVKDSYLLAQEVGTSGTIFNHLFKQAVTFAKRAHSETGIGAHAVSVSYAAVELAKKIFGRLAGKHVLIIGAGKMGTLAAQNLYGSGVGKVTVVNRTLEKAKQLAKQFAGEAKPLGELSCALLEADIVISSTGAKGYILTKEMVAPLEKMRKGRPLFMVDIAVPRDLDPALADLETVFLYDIDDLQDVVAANLAERQKAAARIETMIEAELMAFSQWLQTLGVVPVIAALREKALAIQAETMKSLERKLPHLSERDWKVLNKHTKSIINQLLRDPILQAKELAAGPNAEEALLLFMKIFNIEDAVKAERHIEQAKSVQCDEQDAEAVRAARPSWQL.

Substrate is bound by residues 49–52 (TCNR), S109, 114–116 (ETQ), and Q120. C50 serves as the catalytic Nucleophile. 189-194 (GAGKMG) is a binding site for NADP(+).

It belongs to the glutamyl-tRNA reductase family. As to quaternary structure, homodimer.

It catalyses the reaction (S)-4-amino-5-oxopentanoate + tRNA(Glu) + NADP(+) = L-glutamyl-tRNA(Glu) + NADPH + H(+). It functions in the pathway porphyrin-containing compound metabolism; protoporphyrin-IX biosynthesis; 5-aminolevulinate from L-glutamyl-tRNA(Glu): step 1/2. Its function is as follows. Catalyzes the NADPH-dependent reduction of glutamyl-tRNA(Glu) to glutamate 1-semialdehyde (GSA). In Geobacillus kaustophilus (strain HTA426), this protein is Glutamyl-tRNA reductase.